The chain runs to 668 residues: UvrABC system protein B (668 aa).

One can recognise a Helicase ATP-binding domain in the interval 25–413 (NGINTGLQHQ…QNTVQQVIRP (389 aa)). An ATP-binding site is contributed by 38–45 (GVTGSGKT). The Beta-hairpin motif lies at 91-114 (YYDYYQPEAYIAASDTYIEKDSSV). A Helicase C-terminal domain is found at 429-595 (QVEDALSEIN…TIIKNIDDML (167 aa)). Residues 629 to 664 (TKVIKALEKRMRAYAKELEFEKATTIRDKITEVKQK) enclose the UVR domain.

This sequence belongs to the UvrB family. As to quaternary structure, forms a heterotetramer with UvrA during the search for lesions. Interacts with UvrC in an incision complex.

It is found in the cytoplasm. Its function is as follows. The UvrABC repair system catalyzes the recognition and processing of DNA lesions. A damage recognition complex composed of 2 UvrA and 2 UvrB subunits scans DNA for abnormalities. Upon binding of the UvrA(2)B(2) complex to a putative damaged site, the DNA wraps around one UvrB monomer. DNA wrap is dependent on ATP binding by UvrB and probably causes local melting of the DNA helix, facilitating insertion of UvrB beta-hairpin between the DNA strands. Then UvrB probes one DNA strand for the presence of a lesion. If a lesion is found the UvrA subunits dissociate and the UvrB-DNA preincision complex is formed. This complex is subsequently bound by UvrC and the second UvrB is released. If no lesion is found, the DNA wraps around the other UvrB subunit that will check the other stand for damage. The protein is UvrABC system protein B of Francisella tularensis subsp. tularensis (strain SCHU S4 / Schu 4).